The chain runs to 138 residues: ATP synthase epsilon chain (138 aa).

It belongs to the ATPase epsilon chain family. In terms of assembly, F-type ATPases have 2 components, CF(1) - the catalytic core - and CF(0) - the membrane proton channel. CF(1) has five subunits: alpha(3), beta(3), gamma(1), delta(1), epsilon(1). CF(0) has three main subunits: a, b and c.

The protein resides in the cell inner membrane. In terms of biological role, produces ATP from ADP in the presence of a proton gradient across the membrane. This Geotalea daltonii (strain DSM 22248 / JCM 15807 / FRC-32) (Geobacter daltonii) protein is ATP synthase epsilon chain.